A 72-amino-acid polypeptide reads, in one-letter code: Gene 35 protein (72 aa).

The sequence is that of Gene 35 protein (35) from Mycobacterium phage L5 (Mycobacteriophage L5).